Consider the following 145-residue polypeptide: 3-hydroxyacyl-[acyl-carrier-protein] dehydratase FabZ (145 aa).

The active site involves His-49.

The protein belongs to the thioester dehydratase family. FabZ subfamily.

The protein localises to the cytoplasm. The catalysed reaction is a (3R)-hydroxyacyl-[ACP] = a (2E)-enoyl-[ACP] + H2O. Functionally, involved in unsaturated fatty acids biosynthesis. Catalyzes the dehydration of short chain beta-hydroxyacyl-ACPs and long chain saturated and unsaturated beta-hydroxyacyl-ACPs. This Rickettsia bellii (strain OSU 85-389) protein is 3-hydroxyacyl-[acyl-carrier-protein] dehydratase FabZ.